Consider the following 295-residue polypeptide: MEFRQLRYFVAAAEEGNVGAAARRLHISQPPVTRQIHALEQHLGVLLFERSARGVQLTPAGAAFLEDARRMLELGRTSVDRSRAASRGEIGQLDIGYLGTAIYQTVPALLHAFTQAVPGATLSLALMPKVRQIEALRAGTIHLGVGRFYPQEPGITVEHLHYERLYIAAGSSIARQLRQDPTLLRLKSESLVLFPKEGRPSFADEVIALMRRAGVEPRVTAIVEDVNAALGLVAAGAGVTLVPASVAAIRRPFVRTMEMADASDKVPVSLTYLTDSRVPVLRAFLDVARRGKGQK.

The HTH lysR-type domain maps to 1–58; it reads MEFRQLRYFVAAAEEGNVGAAARRLHISQPPVTRQIHALEQHLGVLLFERSARGVQLT. Residues 18–37 constitute a DNA-binding region (H-T-H motif); that stretch reads VGAAARRLHISQPPVTRQIH.

The protein belongs to the LysR transcriptional regulatory family.

The protein localises to the cytoplasm. In terms of biological role, involved in the regulation of 3-chlorocatechol degradation. Transcriptional regulator of tfdB expression. Acts as a repressor in the absence of its effector (either 2-cis-chlorodiene lactone or chloromaleylacetate) but acts as an activator when its effector is present. This Cupriavidus pinatubonensis (strain JMP 134 / LMG 1197) (Cupriavidus necator (strain JMP 134)) protein is HTH-type transcriptional regulator TdfR (tfdR).